The following is a 440-amino-acid chain: MENILKLIARYPLVEDLVALKETTWFNPGATSLAQGLPYVGLTEQDVNAAHDRLARFAPYLAKAFPQTAAAGGIIESDVVAIPAMQKRLEKEYGQTIDGEMLLKKDSHLAISGSIKARGGIYEVLTHAEKLALEAGLLTTDDDYSVLLSPEFKQFFSQYSIAVGSTGNLGLSIGIMSACIGFKVTVHMSADARAWKKAKLRSHGVTVVEYEDDYGVAVEQGRKAAQSDPNCFFIDDENSRTLFLGYAVAGQRLKAQFAQQGRVVDASHPLFVYLPCGVGGGPGGVAFGLKLAFGDNVHCFFAEPTHSPCMLLGVYTGLHDAISVQDIGIDNLTAADGLAVGRASGFVGRAMERLLDGLYTLDDQTMYDMLGWLAQEEGIRLEPSALAGMAGPQRICASVAYQQRHGFSQTQLGNATHLIWATGGGMVPEDEMEQYLAKGR.

K116 bears the N6-(pyridoxal phosphate)lysine mark.

The protein belongs to the serine/threonine dehydratase family. DsdA subfamily. As to quaternary structure, monomer. The cofactor is pyridoxal 5'-phosphate.

The catalysed reaction is D-serine = pyruvate + NH4(+). This chain is D-serine dehydratase, found in Salmonella typhi.